A 208-amino-acid polypeptide reads, in one-letter code: Fusaric acid resistance protein FusD (208 aa).

The helical transmembrane segment at leucine 7–leucine 29 threads the bilayer.

Its subcellular location is the cell membrane. Involved in the resistance (detoxification) of the fungal toxin fusaric acid. The protein is Fusaric acid resistance protein FusD (fusD) of Burkholderia cepacia (Pseudomonas cepacia).